Here is a 698-residue protein sequence, read N- to C-terminus: FHF complex subunit HOOK-interacting protein 2B (698 aa).

It belongs to the FHIP family.

This Xenopus tropicalis (Western clawed frog) protein is FHF complex subunit HOOK-interacting protein 2B (fhip2b).